The following is a 274-amino-acid chain: Glutamate racemase (274 aa).

Residues 9 to 10 and 41 to 42 contribute to the substrate site; these read DS and YG. C73 acts as the Proton donor/acceptor in catalysis. 74-75 lines the substrate pocket; it reads NT. C183 (proton donor/acceptor) is an active-site residue. Substrate is bound at residue 184 to 185; that stretch reads TH.

It belongs to the aspartate/glutamate racemases family.

The catalysed reaction is L-glutamate = D-glutamate. It functions in the pathway cell wall biogenesis; peptidoglycan biosynthesis. Functionally, provides the (R)-glutamate required for cell wall biosynthesis. The chain is Glutamate racemase from Shewanella baltica (strain OS155 / ATCC BAA-1091).